Reading from the N-terminus, the 670-residue chain is DUF724 domain-containing protein 1 (670 aa).

Disordered regions lie at residues 283-315 and 368-445; these read HNGP…PMTP and ANAE…NNDD. Polar residues-rich tracts occupy residues 294–309, 379–392, and 426–442; these read SPSN…SSSG, RNQN…TQQM, and CNGS…SICN. Positions 484 to 669 constitute a DUF724 domain; sequence PFAKKLPFWK…LEFQTTVSTP (186 aa).

Expressed in stems and flowers.

The protein localises to the nucleus. Functionally, may be involved in the polar growth of plant cells via transportation of RNAs. This chain is DUF724 domain-containing protein 1, found in Arabidopsis thaliana (Mouse-ear cress).